The following is a 266-amino-acid chain: uncharacterized protein (266 aa).

8 consecutive transmembrane segments (helical) span residues I9–F29, T37–Y57, L69–L89, F123–T143, Y153–A173, L184–L204, S216–L236, and T246–V266.

It is found in the cell membrane. This is an uncharacterized protein from Haemophilus influenzae (strain ATCC 51907 / DSM 11121 / KW20 / Rd).